The primary structure comprises 176 residues: Peptide deformylase 2 (176 aa).

Fe cation is bound by residues Cys99 and His141. Glu142 is an active-site residue. His145 is a binding site for Fe cation.

Belongs to the polypeptide deformylase family. It depends on Fe(2+) as a cofactor.

It carries out the reaction N-terminal N-formyl-L-methionyl-[peptide] + H2O = N-terminal L-methionyl-[peptide] + formate. Its function is as follows. Removes the formyl group from the N-terminal Met of newly synthesized proteins. Requires at least a dipeptide for an efficient rate of reaction. N-terminal L-methionine is a prerequisite for activity but the enzyme has broad specificity at other positions. The protein is Peptide deformylase 2 of Bordetella bronchiseptica (strain ATCC BAA-588 / NCTC 13252 / RB50) (Alcaligenes bronchisepticus).